A 430-amino-acid polypeptide reads, in one-letter code: Adenylosuccinate synthetase (430 aa).

GTP contacts are provided by residues G12 to K18 and G40 to T42. D13 serves as the catalytic Proton acceptor. 2 residues coordinate Mg(2+): D13 and G40. Residues D13–K16, N38–H41, T128, R142, Q223, T238, and R302 each bind IMP. Catalysis depends on H41, which acts as the Proton donor. Position 298-304 (T298–R304) interacts with substrate. Residues R304, S330–D332, and S413–G415 each bind GTP.

Belongs to the adenylosuccinate synthetase family. Homodimer. Mg(2+) is required as a cofactor.

The protein resides in the cytoplasm. The catalysed reaction is IMP + L-aspartate + GTP = N(6)-(1,2-dicarboxyethyl)-AMP + GDP + phosphate + 2 H(+). It functions in the pathway purine metabolism; AMP biosynthesis via de novo pathway; AMP from IMP: step 1/2. Its function is as follows. Plays an important role in the de novo pathway of purine nucleotide biosynthesis. Catalyzes the first committed step in the biosynthesis of AMP from IMP. This chain is Adenylosuccinate synthetase, found in Lactococcus lactis subsp. cremoris (strain SK11).